The following is a 664-amino-acid chain: 26S rRNA (cytosine-C(5))-methyltransferase nsun-1 (664 aa).

The tract at residues 1-105 is disordered; it reads MAIVKKKKVS…DDSDAGDHLP (105 aa). Over residues 38 to 52 the composition is skewed to basic residues; the sequence is PKKKKLVKKVKKSAK. The segment covering 53–68 has biased composition (basic and acidic residues); that stretch reads KAHEEEPIEQVEKLQL. Residues 84–99 are compositionally biased toward acidic residues; the sequence is SDDEDLRDDYSDDDSD. S-adenosyl-L-methionine contacts are provided by residues 313-319, Asp-337, and Asp-382; that span reads CSAPGGK. Catalysis depends on Cys-439, which acts as the Nucleophile. The segment at 513–664 is disordered; sequence KMSKQGVMEK…RRKKMLAKQQ (152 aa). Over residues 519–528 the composition is skewed to basic and acidic residues; sequence VMEKEKEKAA. A compositionally biased stretch (acidic residues) spans 541–550; sequence EASESSDDEE. Positions 563–572 are enriched in basic residues; that stretch reads KPAKKQQQKK. Positions 606-618 are enriched in basic and acidic residues; that stretch reads KAAEKQAAVKEDD. Composition is skewed to basic residues over residues 627 to 644 and 652 to 664; these read KRAKKPTQFKSKVPKRAA and VKNRRKKMLAKQQ.

This sequence belongs to the class I-like SAM-binding methyltransferase superfamily. RsmB/NOP family.

The protein localises to the nucleus. Its subcellular location is the nucleolus. The catalysed reaction is a cytidine in 26S rRNA + S-adenosyl-L-methionine = a 5-methylcytidine in 26S rRNA + S-adenosyl-L-homocysteine + H(+). Functionally, methyltransferase which methylates the carbon-5 position of cytosine 2982 to 5-methylcytosine (m5C2982) in 26S rRNA. May play a role in the translation of leucine and proline codons. May be required for the translation of specific mRNAs such as mRNAs involved in gonad development, collagen production and cuticle integrity. Plays a role in ensuring the correct localization of the germline-specific protein gld-1 during development. Not required for pre-rRNA processing, the production of mature 5S, 5.8S, 18S or 26S rRNAs or global translation. Plays a role in positively regulating fertility. This Caenorhabditis elegans protein is 26S rRNA (cytosine-C(5))-methyltransferase nsun-1.